Here is a 508-residue protein sequence, read N- to C-terminus: Hydroxymethylglutaryl-CoA synthase, mitochondrial (508 aa).

A mitochondrion-targeting transit peptide spans 1 to 37 (MQRLLTPVRQVLQVKRVMQEASLLPARLLPAAHPSFS). Lysine 52 carries the N6-succinyllysine modification. Residues glutamate 80 and alanine 81 each coordinate (3S)-3-hydroxy-3-methylglutaryl-CoA. Residue glutamate 132 is the Proton donor/acceptor of the active site. Positions 166, 204, and 208 each coordinate (3S)-3-hydroxy-3-methylglutaryl-CoA. The Acyl-thioester intermediate role is filled by cysteine 166. Lysine 243 is subject to N6-acetyllysine. An N6-acetyllysine; alternate modification is found at lysine 256. N6-succinyllysine; alternate is present on lysine 256. (3S)-3-hydroxy-3-methylglutaryl-CoA contacts are provided by serine 258 and histidine 301. Catalysis depends on histidine 301, which acts as the Proton donor/acceptor. Position 306 is an N6-acetyllysine (lysine 306). Lysine 310 lines the (3S)-3-hydroxy-3-methylglutaryl-CoA pocket. At lysine 310 the chain carries N6-acetyllysine; alternate. Lysine 310 carries the N6-succinyllysine; alternate modification. An N6-succinyllysine modification is found at lysine 333. An N6-acetyllysine; alternate mark is found at lysine 342, lysine 350, lysine 354, and lysine 358. An N6-succinyllysine; alternate mark is found at lysine 342, lysine 350, lysine 354, and lysine 358. (3S)-3-hydroxy-3-methylglutaryl-CoA is bound by residues asparagine 380 and serine 414. At serine 433 the chain carries Phosphoserine. Lysine 437 carries the post-translational modification N6-acetyllysine. Serine 440 carries the phosphoserine modification. Lysine 447 carries the post-translational modification N6-acetyllysine; alternate. Lysine 447 carries the N6-succinyllysine; alternate modification. Serine 456 carries the phosphoserine modification. Lysine 473 bears the N6-acetyllysine; alternate mark. At lysine 473 the chain carries N6-succinyllysine; alternate. At serine 477 the chain carries Phosphoserine.

The protein belongs to the thiolase-like superfamily. HMG-CoA synthase family. Homodimer. Succinylated. Desuccinylated by SIRT5. Succinylation, at least at Lys-310, inhibits the enzymatic activity.

The protein localises to the mitochondrion. The enzyme catalyses acetoacetyl-CoA + acetyl-CoA + H2O = (3S)-3-hydroxy-3-methylglutaryl-CoA + CoA + H(+). The protein operates within metabolic intermediate biosynthesis; (R)-mevalonate biosynthesis; (R)-mevalonate from acetyl-CoA: step 2/3. In terms of biological role, catalyzes the first irreversible step in ketogenesis, condensing acetyl-CoA to acetoacetyl-CoA to form HMG-CoA, which is converted by HMG-CoA reductase (HMGCR) into mevalonate. This Bos taurus (Bovine) protein is Hydroxymethylglutaryl-CoA synthase, mitochondrial (HMGCS2).